The sequence spans 898 residues: DNA gyrase subunit A (898 aa).

Disordered stretches follow at residues 1-22 and 36-56; these read MSDD…DDDS and EEEK…EKEG. Residues 97-562 enclose the Topo IIA-type catalytic domain; that stretch reads LPDARDGLKP…VMSSINNEDL (466 aa). The active-site O-(5'-phospho-DNA)-tyrosine intermediate is the Tyr-185. Residues 589–595 carry the GyrA-box motif; the sequence is QRRGGVG.

The protein belongs to the type II topoisomerase GyrA/ParC subunit family. Heterotetramer, composed of two GyrA and two GyrB chains. In the heterotetramer, GyrA contains the active site tyrosine that forms a transient covalent intermediate with DNA, while GyrB binds cofactors and catalyzes ATP hydrolysis.

It localises to the cytoplasm. It carries out the reaction ATP-dependent breakage, passage and rejoining of double-stranded DNA.. A type II topoisomerase that negatively supercoils closed circular double-stranded (ds) DNA in an ATP-dependent manner to modulate DNA topology and maintain chromosomes in an underwound state. Negative supercoiling favors strand separation, and DNA replication, transcription, recombination and repair, all of which involve strand separation. Also able to catalyze the interconversion of other topological isomers of dsDNA rings, including catenanes and knotted rings. Type II topoisomerases break and join 2 DNA strands simultaneously in an ATP-dependent manner. The polypeptide is DNA gyrase subunit A (Metamycoplasma arthritidis (strain 158L3-1) (Mycoplasma arthritidis)).